A 393-amino-acid chain; its full sequence is Methylthioribose kinase (393 aa).

ATP is bound by residues Asn-38, Lys-53, and 107–109 (EDL). Asp-225 provides a ligand contact to substrate. 242–244 (DPE) is a binding site for ATP. Arg-332 provides a ligand contact to substrate.

It belongs to the methylthioribose kinase family. In terms of assembly, homodimer.

The catalysed reaction is 5-(methylsulfanyl)-D-ribose + ATP = 5-(methylsulfanyl)-alpha-D-ribose 1-phosphate + ADP + H(+). The protein operates within amino-acid biosynthesis; L-methionine biosynthesis via salvage pathway; S-methyl-5-thio-alpha-D-ribose 1-phosphate from S-methyl-5'-thioadenosine (hydrolase route): step 2/2. In terms of biological role, catalyzes the phosphorylation of methylthioribose into methylthioribose-1-phosphate. This chain is Methylthioribose kinase, found in Bacillus cereus (strain ATCC 10987 / NRS 248).